The chain runs to 287 residues: Putative sugar uptake protein M6_Spy1874 (287 aa).

10 consecutive transmembrane segments (helical) span residues 4–26 (IFYA…KIGG), 33–50 (LGMT…WLIV), 55–72 (TLQL…WSIG), 85–107 (VSVA…GVLV), 117–134 (FVVG…FYFS), 154–171 (FRAL…AVLF), 181–200 (SVIL…FMSF), 207–229 (YVIK…LLAA), 234–256 (LAIA…ILFL), and 268–285 (VVTG…LGVV).

This sequence belongs to the GRP transporter (TC 2.A.7.5) family.

It localises to the cell membrane. The polypeptide is Putative sugar uptake protein M6_Spy1874 (Streptococcus pyogenes serotype M6 (strain ATCC BAA-946 / MGAS10394)).